The following is a 337-amino-acid chain: Pentalenene synthase (337 aa).

5 residues coordinate Mg(2+): aspartate 80, aspartate 84, asparagine 219, serine 223, and glutamate 227. Residues aspartate 80 to aspartate 84 carry the DDXXD motif motif.

The protein belongs to the terpene synthase family. As to quaternary structure, monomer. The cofactor is Mg(2+).

It catalyses the reaction (2E,6E)-farnesyl diphosphate = pentalenene + diphosphate. Its pathway is sesquiterpene biosynthesis; pentalenene biosynthesis; pentalenene from farnesyl diphosphate: step 1/1. It participates in antibiotic biosynthesis; pentalenolactone biosynthesis. Functionally, catalyzes the cyclization of farnesyl diphosphate (FPP) to the tricyclic sesquiterpene pentalenene, which is the hydrocarbon precursor of the pentalenolactone family of antibiotics produced by a variety of Streptomyces species. The chain is Pentalenene synthase (pntA) from Streptomyces arenae.